Reading from the N-terminus, the 344-residue chain is Glycerol-3-phosphate dehydrogenase [NAD(P)+] (344 aa).

4 residues coordinate NADPH: Ser18, Tyr19, His39, and Lys113. Residues Lys113, Gly142, and Thr144 each contribute to the sn-glycerol 3-phosphate site. Ala146 is an NADPH binding site. Sn-glycerol 3-phosphate contacts are provided by Lys198, Asp251, Ser261, Arg262, and Asn263. Lys198 (proton acceptor) is an active-site residue. Position 262 (Arg262) interacts with NADPH. The NADPH site is built by Ile286 and Glu288.

Belongs to the NAD-dependent glycerol-3-phosphate dehydrogenase family.

It localises to the cytoplasm. It catalyses the reaction sn-glycerol 3-phosphate + NAD(+) = dihydroxyacetone phosphate + NADH + H(+). It carries out the reaction sn-glycerol 3-phosphate + NADP(+) = dihydroxyacetone phosphate + NADPH + H(+). Its pathway is membrane lipid metabolism; glycerophospholipid metabolism. In terms of biological role, catalyzes the reduction of the glycolytic intermediate dihydroxyacetone phosphate (DHAP) to sn-glycerol 3-phosphate (G3P), the key precursor for phospholipid synthesis. The chain is Glycerol-3-phosphate dehydrogenase [NAD(P)+] from Blochmanniella pennsylvanica (strain BPEN).